The chain runs to 238 residues: Chromosome partition protein MukE (238 aa).

Belongs to the MukE family. In terms of assembly, interacts, and probably forms a ternary complex, with MukF and MukB. The complex formation is stimulated by calcium or magnesium.

The protein resides in the cytoplasm. It is found in the nucleoid. Involved in chromosome condensation, segregation and cell cycle progression. May participate in facilitating chromosome segregation by condensation DNA from both sides of a centrally located replisome during cell division. Probably acts via its interaction with MukB and MukF. The polypeptide is Chromosome partition protein MukE (Haemophilus ducreyi (strain 35000HP / ATCC 700724)).